The sequence spans 80 residues: Large ribosomal subunit protein bL31B (80 aa).

This sequence belongs to the bacterial ribosomal protein bL31 family. Type B subfamily. As to quaternary structure, part of the 50S ribosomal subunit.

In Streptococcus mutans serotype c (strain ATCC 700610 / UA159), this protein is Large ribosomal subunit protein bL31B.